Consider the following 466-residue polypeptide: Tubulointerstitial nephritis antigen-like (466 aa).

A signal peptide spans 1–21 (MWGCWLGLLLLLLAGQAALEA). The SMB domain maps to 49–96 (EQDMCCRGRADECALPYLGATCYCDLFCNRTVSDCCPDFWDFCLGIPP). Intrachain disulfides connect cysteine 53-cysteine 72, cysteine 70-cysteine 72, cysteine 70-cysteine 84, cysteine 76-cysteine 83, and cysteine 84-cysteine 91. Asparagine 77 carries an N-linked (GlcNAc...) asparagine glycan. A glycan (N-linked (GlcNAc...) asparagine) is linked at asparagine 160.

Belongs to the peptidase C1 family. In terms of processing, glycosylated. In terms of tissue distribution, highly expressed in kidney, heart and adrenocortical cells of adrenal glands. Moderately expressed in spleen and liver. Also found in prostate, seminal vesicle, epididymis and testis in male reproductive organs. In adrenal glands is found in the outer cortical regions corresponding to the zona glomerulosa (zG) and the undifferentiated cell zone (zU) (at protein level).

It is found in the secreted. May be implicated in the adrenocortical zonation and in mechanisms for repressing the CYP11B1 gene expression in adrenocortical cells. This is a non catalytic peptidase C1 family protein. The chain is Tubulointerstitial nephritis antigen-like (Tinagl1) from Mus musculus (Mouse).